We begin with the raw amino-acid sequence, 236 residues long: Leucyl/phenylalanyl-tRNA--protein transferase (236 aa).

A compositionally biased stretch (polar residues) spans 1-13; it reads MNSLSYLNQDQQS. The tract at residues 1-22 is disordered; the sequence is MNSLSYLNQDQQSFPPPEQALS.

It belongs to the L/F-transferase family.

The protein localises to the cytoplasm. The catalysed reaction is N-terminal L-lysyl-[protein] + L-leucyl-tRNA(Leu) = N-terminal L-leucyl-L-lysyl-[protein] + tRNA(Leu) + H(+). It catalyses the reaction N-terminal L-arginyl-[protein] + L-leucyl-tRNA(Leu) = N-terminal L-leucyl-L-arginyl-[protein] + tRNA(Leu) + H(+). The enzyme catalyses L-phenylalanyl-tRNA(Phe) + an N-terminal L-alpha-aminoacyl-[protein] = an N-terminal L-phenylalanyl-L-alpha-aminoacyl-[protein] + tRNA(Phe). In terms of biological role, functions in the N-end rule pathway of protein degradation where it conjugates Leu, Phe and, less efficiently, Met from aminoacyl-tRNAs to the N-termini of proteins containing an N-terminal arginine or lysine. This is Leucyl/phenylalanyl-tRNA--protein transferase from Shewanella piezotolerans (strain WP3 / JCM 13877).